Reading from the N-terminus, the 221-residue chain is Protein FixW (221 aa).

In terms of domain architecture, Thioredoxin spans 5-156 (LNLGSPAPPI…LPKVIDGNWR (152 aa)). A disulfide bridge connects residues cysteine 43 and cysteine 46.

This sequence belongs to the thioredoxin family.

The chain is Protein FixW (fixW) from Rhizobium leguminosarum.